The primary structure comprises 322 residues: Undecaprenyl-phosphate 4-deoxy-4-formamido-L-arabinose transferase (322 aa).

The Cytoplasmic segment spans residues 1-235 (MFEIHPVKKV…TCLTTTPLRM (235 aa)). A helical transmembrane segment spans residues 236–256 (LSLLGSIIAIGGFSIAVLLVI). At 257-269 (LRLTFGPQWAAEG) the chain is on the periplasmic side. The chain crosses the membrane as a helical span at residues 270–290 (VFMLFAVLFTFIGAQFIGMGL). Residues 291–322 (LGEYIGRIYTDVRARPRYFVQQVIRPSSKENE) lie on the Cytoplasmic side of the membrane.

Belongs to the glycosyltransferase 2 family.

It is found in the cell inner membrane. It catalyses the reaction UDP-4-deoxy-4-formamido-beta-L-arabinose + di-trans,octa-cis-undecaprenyl phosphate = 4-deoxy-4-formamido-alpha-L-arabinopyranosyl di-trans,octa-cis-undecaprenyl phosphate + UDP. It functions in the pathway glycolipid biosynthesis; 4-amino-4-deoxy-alpha-L-arabinose undecaprenyl phosphate biosynthesis; 4-amino-4-deoxy-alpha-L-arabinose undecaprenyl phosphate from UDP-4-deoxy-4-formamido-beta-L-arabinose and undecaprenyl phosphate: step 1/2. Its pathway is bacterial outer membrane biogenesis; lipopolysaccharide biosynthesis. Catalyzes the transfer of 4-deoxy-4-formamido-L-arabinose from UDP to undecaprenyl phosphate. The modified arabinose is attached to lipid A and is required for resistance to polymyxin and cationic antimicrobial peptides. This chain is Undecaprenyl-phosphate 4-deoxy-4-formamido-L-arabinose transferase, found in Shigella sonnei (strain Ss046).